Reading from the N-terminus, the 516-residue chain is D-alanine--D-alanyl carrier protein ligase (516 aa).

156 to 157 (TS) is an ATP binding site. D-alanine is bound at residue Asp-203. 298–303 (NAYGPT) is a binding site for ATP. Val-307 contributes to the D-alanine binding site. Residues Asp-389, 401 to 404 (YGGR), and Lys-503 each bind ATP. D-alanine is bound at residue Lys-503.

It belongs to the ATP-dependent AMP-binding enzyme family. DltA subfamily.

Its subcellular location is the cytoplasm. It carries out the reaction holo-[D-alanyl-carrier protein] + D-alanine + ATP = D-alanyl-[D-alanyl-carrier protein] + AMP + diphosphate. It participates in cell wall biogenesis; lipoteichoic acid biosynthesis. Its function is as follows. Catalyzes the first step in the D-alanylation of lipoteichoic acid (LTA), the activation of D-alanine and its transfer onto the D-alanyl carrier protein (Dcp) DltC. In an ATP-dependent two-step reaction, forms a high energy D-alanyl-AMP intermediate, followed by transfer of the D-alanyl residue as a thiol ester to the phosphopantheinyl prosthetic group of the Dcp. D-alanylation of LTA plays an important role in modulating the properties of the cell wall in Gram-positive bacteria, influencing the net charge of the cell wall. The chain is D-alanine--D-alanyl carrier protein ligase from Streptococcus pneumoniae (strain ATCC 700669 / Spain 23F-1).